The sequence spans 145 residues: D-aminoacyl-tRNA deacylase (145 aa).

The Gly-cisPro motif, important for rejection of L-amino acids signature appears at 137 to 138; that stretch reads GP.

This sequence belongs to the DTD family. In terms of assembly, homodimer.

The protein resides in the cytoplasm. It catalyses the reaction glycyl-tRNA(Ala) + H2O = tRNA(Ala) + glycine + H(+). The catalysed reaction is a D-aminoacyl-tRNA + H2O = a tRNA + a D-alpha-amino acid + H(+). Functionally, an aminoacyl-tRNA editing enzyme that deacylates mischarged D-aminoacyl-tRNAs. Also deacylates mischarged glycyl-tRNA(Ala), protecting cells against glycine mischarging by AlaRS. Acts via tRNA-based rather than protein-based catalysis; rejects L-amino acids rather than detecting D-amino acids in the active site. By recycling D-aminoacyl-tRNA to D-amino acids and free tRNA molecules, this enzyme counteracts the toxicity associated with the formation of D-aminoacyl-tRNA entities in vivo and helps enforce protein L-homochirality. This Pseudomonas paraeruginosa (strain DSM 24068 / PA7) (Pseudomonas aeruginosa (strain PA7)) protein is D-aminoacyl-tRNA deacylase.